Reading from the N-terminus, the 80-residue chain is uncharacterized protein (80 aa).

This is an uncharacterized protein from Shigella flexneri.